The primary structure comprises 192 residues: Thymidine kinase (192 aa).

ATP is bound by residues 9–16 and 87–90; these read SAMNAGKS and DECQ. E88 functions as the Proton acceptor in the catalytic mechanism. C145, C147, C182, and H185 together coordinate Zn(2+).

It belongs to the thymidine kinase family. As to quaternary structure, homotetramer.

The protein localises to the cytoplasm. The catalysed reaction is thymidine + ATP = dTMP + ADP + H(+). In Photobacterium profundum (strain SS9), this protein is Thymidine kinase.